Here is a 206-residue protein sequence, read N- to C-terminus: Small ribosomal subunit protein uS4 (206 aa).

Positions 96–156 constitute an S4 RNA-binding domain; sequence RRLDNVVYRM…EKSKNQLRIK (61 aa).

Belongs to the universal ribosomal protein uS4 family. As to quaternary structure, part of the 30S ribosomal subunit. Contacts protein S5. The interaction surface between S4 and S5 is involved in control of translational fidelity.

One of the primary rRNA binding proteins, it binds directly to 16S rRNA where it nucleates assembly of the body of the 30S subunit. Its function is as follows. With S5 and S12 plays an important role in translational accuracy. The polypeptide is Small ribosomal subunit protein uS4 (Hahella chejuensis (strain KCTC 2396)).